A 374-amino-acid chain; its full sequence is DNA replication and repair protein RecF (374 aa).

30–37 (GENAQGKT) is a binding site for ATP.

It belongs to the RecF family.

It is found in the cytoplasm. The RecF protein is involved in DNA metabolism; it is required for DNA replication and normal SOS inducibility. RecF binds preferentially to single-stranded, linear DNA. It also seems to bind ATP. This Geobacillus sp. (strain WCH70) protein is DNA replication and repair protein RecF.